A 199-amino-acid polypeptide reads, in one-letter code: N-(5'-phosphoribosyl)anthranilate isomerase (199 aa).

The protein belongs to the TrpF family.

It carries out the reaction N-(5-phospho-beta-D-ribosyl)anthranilate = 1-(2-carboxyphenylamino)-1-deoxy-D-ribulose 5-phosphate. It functions in the pathway amino-acid biosynthesis; L-tryptophan biosynthesis; L-tryptophan from chorismate: step 3/5. The chain is N-(5'-phosphoribosyl)anthranilate isomerase from Streptococcus pneumoniae serotype 4 (strain ATCC BAA-334 / TIGR4).